A 213-amino-acid polypeptide reads, in one-letter code: FMN-dependent NADH:quinone oxidoreductase 1 (213 aa).

Residue 18-20 participates in FMN binding; it reads SVS.

It belongs to the azoreductase type 1 family. In terms of assembly, homodimer. FMN is required as a cofactor.

It carries out the reaction 2 a quinone + NADH + H(+) = 2 a 1,4-benzosemiquinone + NAD(+). The catalysed reaction is N,N-dimethyl-1,4-phenylenediamine + anthranilate + 2 NAD(+) = 2-(4-dimethylaminophenyl)diazenylbenzoate + 2 NADH + 2 H(+). In terms of biological role, quinone reductase that provides resistance to thiol-specific stress caused by electrophilic quinones. Also exhibits azoreductase activity. Catalyzes the reductive cleavage of the azo bond in aromatic azo compounds to the corresponding amines. This Bacillus cereus (strain ZK / E33L) protein is FMN-dependent NADH:quinone oxidoreductase 1.